The primary structure comprises 349 residues: Heat-inducible transcription repressor HrcA (349 aa).

This sequence belongs to the HrcA family.

Functionally, negative regulator of class I heat shock genes (grpE-dnaK-dnaJ and groELS operons). Prevents heat-shock induction of these operons. This chain is Heat-inducible transcription repressor HrcA, found in Lactobacillus acidophilus (strain ATCC 700396 / NCK56 / N2 / NCFM).